A 95-amino-acid polypeptide reads, in one-letter code: Co-chaperonin GroES (95 aa).

It belongs to the GroES chaperonin family. Heptamer of 7 subunits arranged in a ring. Interacts with the chaperonin GroEL.

The protein resides in the cytoplasm. Its function is as follows. Together with the chaperonin GroEL, plays an essential role in assisting protein folding. The GroEL-GroES system forms a nano-cage that allows encapsulation of the non-native substrate proteins and provides a physical environment optimized to promote and accelerate protein folding. GroES binds to the apical surface of the GroEL ring, thereby capping the opening of the GroEL channel. This Rhodobacter capsulatus (Rhodopseudomonas capsulata) protein is Co-chaperonin GroES.